The chain runs to 361 residues: RNA-binding protein 4 (361 aa).

2 RRM domains span residues 2–72 and 78–148; these read VKLF…ASKN and TKLH…LSTS. Lys-79 is covalently cross-linked (Glycyl lysine isopeptide (Lys-Gly) (interchain with G-Cter in SUMO2)). Ser-86 is subject to Phosphoserine. The CCHC-type zinc finger occupies 160-177; that stretch reads SGCYRCGKEGHWSKECPI. Positions 196-361 are interaction with TNPO3; the sequence is AVRTPYTMSY…YADRARYSAF (166 aa). Ser-306 carries the post-translational modification Phosphoserine.

In terms of assembly, interacts with TNPO3; the interaction mediates nuclear import of the protein and is disrupted by nuclear Ran bound to GTP. Interacts with EIF4G1 and WT1. Interacts with EIF4A1; the interaction is modulated under stress-induced conditions. Interacts with AGO1. Interacts with AGO2; the interaction occurs under both cell proliferation and differentiation conditions and in an RNA- and phosphorylation-independent manner. Interacts with DDX5; the interaction occurs in an RNA-independent manner. Interacts with RBPMS; the interaction allows cooperative assembly of RNA-bound stable cell-specific alternative splicing regulatory complexes. Post-translationally, phosphorylated. Phosphorylated in vitro on Ser-306 by SRPK1. Phosphorylation on Ser-306 is induced upon cell stress signaling, which alters its subcellular localization and may modulate its activity on IRES-mediated mRNA translation. Phosphorylated. Phosphorylation on Ser-306 is induced upon cell muscle differentiation. As to expression, expressed in the suprachiasmatic nucleus (SCN). Expressed in myocytes; expression gradually increases during muscle cell differentiation (at protein level). Expressed in the suprachiasmatic nucleus (SCN).

It localises to the nucleus. It is found in the nucleolus. Its subcellular location is the nucleus speckle. The protein resides in the cytoplasm. The protein localises to the cytoplasmic granule. RNA-binding factor involved in multiple aspects of cellular processes like alternative splicing of pre-mRNA and translation regulation. Modulates alternative 5'-splice site and exon selection. Acts as a muscle cell differentiation-promoting factor. Activates exon skipping of the PTB pre-mRNA during muscle cell differentiation. Antagonizes the activity of the splicing factor PTBP1 to modulate muscle cell-specific exon selection of alpha tropomyosin. Binds to intronic pyrimidine-rich sequence of the TPM1 and MAPT pre-mRNAs. Required for the translational activation of PER1 mRNA in response to circadian clock. Binds directly to the 3'-UTR of the PER1 mRNA. Exerts a suppressive activity on Cap-dependent translation via binding to CU-rich responsive elements within the 3'UTR of mRNAs, a process increased under stress conditions or during myocytes differentiation. Recruits EIF4A1 to stimulate IRES-dependent translation initiation in respons to cellular stress. Associates to internal ribosome entry segment (IRES) in target mRNA species under stress conditions. Plays a role for miRNA-guided RNA cleavage and translation suppression by promoting association of AGO2-containing miRNPs with their cognate target mRNAs. Associates with miRNAs during muscle cell differentiation. Binds preferentially to 5'-CGCGCG[GCA]-3' motif in vitro. The sequence is that of RNA-binding protein 4 (Rbm4) from Mus musculus (Mouse).